Consider the following 1342-residue polypeptide: DNA-directed RNA polymerase subunit beta (1342 aa).

Belongs to the RNA polymerase beta chain family. In terms of assembly, the RNAP catalytic core consists of 2 alpha, 1 beta, 1 beta' and 1 omega subunit. When a sigma factor is associated with the core the holoenzyme is formed, which can initiate transcription.

It carries out the reaction RNA(n) + a ribonucleoside 5'-triphosphate = RNA(n+1) + diphosphate. Functionally, DNA-dependent RNA polymerase catalyzes the transcription of DNA into RNA using the four ribonucleoside triphosphates as substrates. This Pasteurella multocida (strain Pm70) protein is DNA-directed RNA polymerase subunit beta.